We begin with the raw amino-acid sequence, 341 residues long: UDP-3-O-acylglucosamine N-acyltransferase (341 aa).

The Proton acceptor role is filled by His242.

Belongs to the transferase hexapeptide repeat family. LpxD subfamily. In terms of assembly, homotrimer.

It carries out the reaction a UDP-3-O-[(3R)-3-hydroxyacyl]-alpha-D-glucosamine + a (3R)-hydroxyacyl-[ACP] = a UDP-2-N,3-O-bis[(3R)-3-hydroxyacyl]-alpha-D-glucosamine + holo-[ACP] + H(+). It functions in the pathway bacterial outer membrane biogenesis; LPS lipid A biosynthesis. Functionally, catalyzes the N-acylation of UDP-3-O-acylglucosamine using 3-hydroxyacyl-ACP as the acyl donor. Is involved in the biosynthesis of lipid A, a phosphorylated glycolipid that anchors the lipopolysaccharide to the outer membrane of the cell. The chain is UDP-3-O-acylglucosamine N-acyltransferase from Haemophilus influenzae (strain 86-028NP).